The primary structure comprises 184 residues: MGIEEKLPSGFLLTTVEGLAGYVRKGSLWPASFGLACCAIEMMATAGGRFDIARFGMEAFRASPRQADLMIVAGRVSQKMAPVLRQIYDQMVEPKWVLAMGVCASSGGMFNNYAIVQGVDHIVPVDIYLPGCPPRPEMLLNAILTLHEKIQQMPLGVHRDEVARAAEQAALAATPTIQMKGLLR.

The [4Fe-4S] cluster site is built by Cys37, Cys38, Cys103, and Cys132.

This sequence belongs to the complex I 20 kDa subunit family. NDH-1 is composed of 14 different subunits. Subunits NuoB, C, D, E, F, and G constitute the peripheral sector of the complex. The cofactor is [4Fe-4S] cluster.

The protein resides in the cell membrane. The catalysed reaction is a quinone + NADH + 5 H(+)(in) = a quinol + NAD(+) + 4 H(+)(out). In terms of biological role, NDH-1 shuttles electrons from NADH, via FMN and iron-sulfur (Fe-S) centers, to quinones in the respiratory chain. The immediate electron acceptor for the enzyme in this species is believed to be a menaquinone. Couples the redox reaction to proton translocation (for every two electrons transferred, four hydrogen ions are translocated across the cytoplasmic membrane), and thus conserves the redox energy in a proton gradient. The polypeptide is NADH-quinone oxidoreductase subunit B (Rhodococcus opacus (strain B4)).